Consider the following 152-residue polypeptide: Small ribosomal subunit protein uS15 (152 aa).

Basic residues predominate over residues 1–10 (MAKMHTRTKG). Residues 1–26 (MAKMHTRTKGKSGSTKPIRSESPAWS) form a disordered region. Positions 11–26 (KSGSTKPIRSESPAWS) are enriched in polar residues.

This sequence belongs to the universal ribosomal protein uS15 family. Part of the 30S ribosomal subunit.

This is Small ribosomal subunit protein uS15 from Methanococcoides burtonii (strain DSM 6242 / NBRC 107633 / OCM 468 / ACE-M).